We begin with the raw amino-acid sequence, 338 residues long: Cilia- and flagella-associated protein 36 (338 aa).

A coiled-coil region spans residues 142–179 (ISDLEQEEMKLVSEALRLSKEEYEREQLRRSAKELNCT). Disordered regions lie at residues 175-220 (ELNC…ESPY) and 281-314 (KKQE…KKSL). Polar residues predominate over residues 187–202 (KQSNGSERTPSNTELP). A coiled-coil region spans residues 255 to 330 (NLSQAEKEQL…AEKLKEEVIL (76 aa)).

This sequence belongs to the CFAP36 family.

Its subcellular location is the nucleus. It localises to the cytoplasm. The protein localises to the cell projection. It is found in the cilium. The protein resides in the flagellum. The sequence is that of Cilia- and flagella-associated protein 36 from Xenopus laevis (African clawed frog).